The following is a 130-amino-acid chain: ATP synthase epsilon chain (130 aa).

Belongs to the ATPase epsilon chain family. In terms of assembly, F-type ATPases have 2 components, CF(1) - the catalytic core - and CF(0) - the membrane proton channel. CF(1) has five subunits: alpha(3), beta(3), gamma(1), delta(1), epsilon(1). CF(0) has three main subunits: a, b and c.

The protein localises to the cell inner membrane. Produces ATP from ADP in the presence of a proton gradient across the membrane. This Pelagibacter ubique (strain HTCC1062) protein is ATP synthase epsilon chain.